The primary structure comprises 285 residues: 2-dehydro-3-deoxyphosphooctonate aldolase (285 aa).

The protein belongs to the KdsA family.

It is found in the cytoplasm. It carries out the reaction D-arabinose 5-phosphate + phosphoenolpyruvate + H2O = 3-deoxy-alpha-D-manno-2-octulosonate-8-phosphate + phosphate. It participates in carbohydrate biosynthesis; 3-deoxy-D-manno-octulosonate biosynthesis; 3-deoxy-D-manno-octulosonate from D-ribulose 5-phosphate: step 2/3. It functions in the pathway bacterial outer membrane biogenesis; lipopolysaccharide biosynthesis. In Acinetobacter baylyi (strain ATCC 33305 / BD413 / ADP1), this protein is 2-dehydro-3-deoxyphosphooctonate aldolase.